The primary structure comprises 168 residues: MINDILAPGLRVVFCGINPGKSSAHTGFHFAHPGNRFWKVIHQAGFTDKLLKPEEEQHLLDTRCGITMLVERPTVQANEVNLHELRSGGRELVKKIEDYQPAALAILGKQAYEQAFSQRGAQWGKQRITIGMTQVWVLPNPSGLNRATLDKLVEAYRELDEALVVRGR.

It belongs to the uracil-DNA glycosylase (UDG) superfamily. TDG/mug family. Binds DNA as a monomer.

Its subcellular location is the cytoplasm. It carries out the reaction Specifically hydrolyzes mismatched double-stranded DNA and polynucleotides, releasing free uracil.. Functionally, excises ethenocytosine and uracil, which can arise by alkylation or deamination of cytosine, respectively, from the corresponding mispairs with guanine in ds-DNA. It is capable of hydrolyzing the carbon-nitrogen bond between the sugar-phosphate backbone of the DNA and the mispaired base. The complementary strand guanine functions in substrate recognition. Required for DNA damage lesion repair in stationary-phase cells. This chain is G/U mismatch-specific DNA glycosylase, found in Enterobacter sp. (strain 638).